Consider the following 320-residue polypeptide: Cyclin-D6-1 (320 aa).

Residues 279–320 are disordered; sequence HHRSASSESERTTTVGSAANSADAKRRCMGPPRQWGVGGPDE.

The protein belongs to the cyclin family. Cyclin D subfamily.

The sequence is that of Cyclin-D6-1 (CYCD6-1) from Oryza sativa subsp. japonica (Rice).